A 261-amino-acid chain; its full sequence is 3-hydroxyacyl-CoA dehydrogenase type-2 (261 aa).

Ala-2 bears the N-acetylalanine mark. Positions 20, 22, and 41 each coordinate NAD(+). Residue Lys-53 is modified to N6-acetyllysine; alternate. Lys-53 bears the N6-succinyllysine; alternate mark. Asp-64 and Val-65 together coordinate NAD(+). At Lys-69 the chain carries N6-acetyllysine. Position 91 (Cys-91) interacts with NAD(+). An N6-acetyllysine mark is found at Lys-99 and Lys-105. Residue Ser-155 participates in substrate binding. 4 residues coordinate NAD(+): Tyr-168, Lys-172, Phe-201, and Thr-203. Catalysis depends on Tyr-168, which acts as the Proton acceptor. Lys-212 carries the post-translational modification N6-acetyllysine; alternate. At Lys-212 the chain carries N6-succinyllysine; alternate.

Belongs to the short-chain dehydrogenases/reductases (SDR) family. Homotetramer. Component of mitochondrial ribonuclease P, a complex composed of TRMT10C/MRPP1, HSD17B10/MRPP2 and PRORP/MRPP3. Interacts with TRMT10C/MRPP1; forming the MRPP1-MRPP2 subcomplex of the mitochondrial ribonuclease P complex.

Its subcellular location is the mitochondrion. It is found in the mitochondrion matrix. It localises to the mitochondrion nucleoid. The catalysed reaction is a (3S)-3-hydroxyacyl-CoA + NAD(+) = a 3-oxoacyl-CoA + NADH + H(+). It catalyses the reaction (2S,3S)-3-hydroxy-2-methylbutanoyl-CoA + NAD(+) = 2-methyl-3-oxobutanoyl-CoA + NADH + H(+). It carries out the reaction testosterone + NAD(+) = androst-4-ene-3,17-dione + NADH + H(+). The enzyme catalyses 5alpha-androstane-3alpha,17beta-diol + NAD(+) = 17beta-hydroxy-5alpha-androstan-3-one + NADH + H(+). The catalysed reaction is 17beta-estradiol + NAD(+) = estrone + NADH + H(+). It catalyses the reaction cholate + NAD(+) = 3alpha,12alpha-dihydroxy-7-oxo-5beta-cholanate + NADH + H(+). It carries out the reaction (3S)-3-hydroxybutanoyl-CoA + NAD(+) = acetoacetyl-CoA + NADH + H(+). The enzyme catalyses (3S)-hydroxyoctanoyl-CoA + NAD(+) = 3-oxooctanoyl-CoA + NADH + H(+). The catalysed reaction is (3S)-hydroxyhexadecanoyl-CoA + NAD(+) = 3-oxohexadecanoyl-CoA + NADH + H(+). It catalyses the reaction 17beta-hydroxy-5alpha-androstan-3-one + NAD(+) = 5alpha-androstan-3,17-dione + NADH + H(+). It carries out the reaction 5alpha-pregnan-20beta-ol-3-one + NAD(+) = 5alpha-pregnane-3,20-dione + NADH + H(+). The enzyme catalyses 3alpha-hydroxy-5alpha-pregnan-20-one + NAD(+) = 5alpha-pregnane-3,20-dione + NADH + H(+). The catalysed reaction is cortisone + NAD(+) = 17alpha-hydroxypregn-4-en-3,11,20-trione-21-al + NADH + H(+). It catalyses the reaction 11-dehydrocorticosterone + NAD(+) = pregn-4-ene-3,11,20,21-tetraone + NADH + H(+). It carries out the reaction cortisol + NAD(+) = 11beta,17alpha-dihydroxypregn-4-ene-3,20,21-trione + NADH + H(+). The enzyme catalyses chenodeoxycholate + NAD(+) = 7-oxolithocholate + NADH + H(+). The catalysed reaction is ursodeoxycholate + NAD(+) = 7-oxolithocholate + NADH + H(+). It catalyses the reaction 3beta,7beta-dihydroxy-5beta-cholan-24-oate + NAD(+) = 3beta-hydroxy-7-oxo-5beta-cholan-24-oate + NADH + H(+). It functions in the pathway amino-acid degradation; L-isoleucine degradation. It participates in lipid metabolism; fatty acid beta-oxidation. The protein operates within steroid metabolism. Its pathway is lipid metabolism; bile acid biosynthesis. In terms of biological role, mitochondrial dehydrogenase involved in pathways of fatty acid, branched-chain amino acid and steroid metabolism. Acts as (S)-3-hydroxyacyl-CoA dehydrogenase in mitochondrial fatty acid beta-oxidation, a major degradation pathway of fatty acids. Catalyzes the third step in the beta-oxidation cycle, namely the reversible conversion of (S)-3-hydroxyacyl-CoA to 3-ketoacyl-CoA. Preferentially accepts straight medium- and short-chain acyl-CoA substrates with highest efficiency for (3S)-hydroxybutanoyl-CoA. Acts as 3-hydroxy-2-methylbutyryl-CoA dehydrogenase in branched-chain amino acid catabolic pathway. Catalyzes the oxidation of 3-hydroxy-2-methylbutanoyl-CoA into 2-methyl-3-oxobutanoyl-CoA, a step in isoleucine degradation pathway. Has hydroxysteroid dehydrogenase activity toward steroid hormones and bile acids. Catalyzes the oxidation of 3alpha-, 17beta-, 20beta- and 21-hydroxysteroids and 7alpha- and 7beta-hydroxy bile acids. Oxidizes allopregnanolone/brexanolone at the 3alpha-hydroxyl group, which is known to be critical for the activation of gamma-aminobutyric acid receptors (GABAARs) chloride channel. Has phospholipase C-like activity toward cardiolipin and its oxidized species. Likely oxidizes the 2'-hydroxyl in the head group of cardiolipin to form a ketone intermediate that undergoes nucleophilic attack by water and fragments into diacylglycerol, dihydroxyacetone and orthophosphate. Has higher affinity for cardiolipin with oxidized fatty acids and may degrade these species during the oxidative stress response to protect cells from apoptosis. By interacting with intracellular amyloid-beta, it may contribute to the neuronal dysfunction associated with Alzheimer disease (AD). Essential for structural and functional integrity of mitochondria. Functionally, in addition to mitochondrial dehydrogenase activity, moonlights as a component of mitochondrial ribonuclease P, a complex that cleaves tRNA molecules in their 5'-ends. Together with TRMT10C/MRPP1, forms a subcomplex of the mitochondrial ribonuclease P, named MRPP1-MRPP2 subcomplex, which displays functions that are independent of the ribonuclease P activity. The MRPP1-MRPP2 subcomplex catalyzes the formation of N(1)-methylguanine and N(1)-methyladenine at position 9 (m1G9 and m1A9, respectively) in tRNAs; HSD17B10/MRPP2 acting as a non-catalytic subunit. The MRPP1-MRPP2 subcomplex also acts as a tRNA maturation platform: following 5'-end cleavage by the mitochondrial ribonuclease P complex, the MRPP1-MRPP2 subcomplex enhances the efficiency of 3'-processing catalyzed by ELAC2, retains the tRNA product after ELAC2 processing and presents the nascent tRNA to the mitochondrial CCA tRNA nucleotidyltransferase TRNT1 enzyme. Associates with mitochondrial DNA complexes at the nucleoids to initiate RNA processing and ribosome assembly. This Bos taurus (Bovine) protein is 3-hydroxyacyl-CoA dehydrogenase type-2 (HSD17B10).